Reading from the N-terminus, the 181-residue chain is Biofilm-surface layer protein A (181 aa).

The signal sequence occupies residues 1-28 (MKRKLLSSLAISALSLGLLVSAPTASFA).

The protein belongs to the BslA/BslB family. Forms polymers.

Its subcellular location is the secreted. It localises to the cell wall. Functionally, involved in biofilm formation. Self-polymerizes and forms a layer on the surface of biofilms that confers hydrophobicity to the biofilm. The layer is stable and capable of resistance to high mechanical force compression. Required for complex colony architecture. May function synergistically with exopolysaccharides and TasA amyloid fibers to facilitate the assembly of the biofilm matrix. The polypeptide is Biofilm-surface layer protein A (Bacillus subtilis (strain 168)).